Here is a 310-residue protein sequence, read N- to C-terminus: S-methyl-5'-thioadenosine phosphorylase (310 aa).

Residues Thr-20, Arg-62–His-63, and Ser-95–Ala-96 each bind phosphate. Met-197 provides a ligand contact to substrate. A phosphate-binding site is contributed by Ser-198. Asp-221–Asp-223 contributes to the substrate binding site.

Belongs to the PNP/MTAP phosphorylase family. MTAP subfamily. In terms of assembly, homotrimer.

It is found in the cytoplasm. The protein localises to the nucleus. The enzyme catalyses S-methyl-5'-thioadenosine + phosphate = 5-(methylsulfanyl)-alpha-D-ribose 1-phosphate + adenine. Its pathway is amino-acid biosynthesis; L-methionine biosynthesis via salvage pathway; S-methyl-5-thio-alpha-D-ribose 1-phosphate from S-methyl-5'-thioadenosine (phosphorylase route): step 1/1. In terms of biological role, catalyzes the reversible phosphorylation of S-methyl-5'-thioadenosine (MTA) to adenine and 5-methylthioribose-1-phosphate. Involved in the breakdown of MTA, a major by-product of polyamine biosynthesis. Responsible for the first step in the methionine salvage pathway after MTA has been generated from S-adenosylmethionine. Has broad substrate specificity with 6-aminopurine nucleosides as preferred substrates. The protein is S-methyl-5'-thioadenosine phosphorylase of Neurospora crassa (strain ATCC 24698 / 74-OR23-1A / CBS 708.71 / DSM 1257 / FGSC 987).